Reading from the N-terminus, the 71-residue chain is ATP synthase subunit c (71 aa).

2 helical membrane-spanning segments follow: residues 5 to 25 (GAAI…AIIV) and 47 to 67 (FIGV…GFLI).

This sequence belongs to the ATPase C chain family. In terms of assembly, F-type ATPases have 2 components, F(1) - the catalytic core - and F(0) - the membrane proton channel. F(1) has five subunits: alpha(3), beta(3), gamma(1), delta(1), epsilon(1). F(0) has three main subunits: a(1), b(2) and c(10-14). The alpha and beta chains form an alternating ring which encloses part of the gamma chain. F(1) is attached to F(0) by a central stalk formed by the gamma and epsilon chains, while a peripheral stalk is formed by the delta and b chains.

Its subcellular location is the cell membrane. Its function is as follows. F(1)F(0) ATP synthase produces ATP from ADP in the presence of a proton or sodium gradient. F-type ATPases consist of two structural domains, F(1) containing the extramembraneous catalytic core and F(0) containing the membrane proton channel, linked together by a central stalk and a peripheral stalk. During catalysis, ATP synthesis in the catalytic domain of F(1) is coupled via a rotary mechanism of the central stalk subunits to proton translocation. Key component of the F(0) channel; it plays a direct role in translocation across the membrane. A homomeric c-ring of between 10-14 subunits forms the central stalk rotor element with the F(1) delta and epsilon subunits. In Alkalihalobacillus alcalophilus (Bacillus alcalophilus), this protein is ATP synthase subunit c.